The chain runs to 728 residues: Catalase-peroxidase (728 aa).

The segment at residues 91–218 (WHSAGTYRTA…LAAVQMGLIY (128 aa)) is a cross-link (tryptophyl-tyrosyl-methioninium (Trp-Tyr) (with M-244)). H92 (proton acceptor) is an active-site residue. A cross-link (tryptophyl-tyrosyl-methioninium (Tyr-Met) (with W-91)) is located at residues 218 to 244 (YVNPEGPDGNPDPVAAARDIRDTFARM). Residue H259 participates in heme b binding.

This sequence belongs to the peroxidase family. Peroxidase/catalase subfamily. Homodimer or homotetramer. Heme b serves as cofactor. In terms of processing, formation of the three residue Trp-Tyr-Met cross-link is important for the catalase, but not the peroxidase activity of the enzyme.

The catalysed reaction is H2O2 + AH2 = A + 2 H2O. The enzyme catalyses 2 H2O2 = O2 + 2 H2O. Bifunctional enzyme with both catalase and broad-spectrum peroxidase activity. The polypeptide is Catalase-peroxidase (Burkholderia pseudomallei (strain 1710b)).